Reading from the N-terminus, the 184-residue chain is MSRVGNKAIEVPNAVKVDIKDRNFISVEGPKGKLEYQFNHRLIITNENKVITVKRPNDEIFMKKIHGTTRALLSNMVEGVSKGFQKTLKIVGLAYRAQIKGKQLILSLGFSHPVSVAIPDNLEVVVNQNTEIVIKGIDKQLVGEFAAKNVKLRKPEPYKGKGIRYVGQYVRQKAGKSAKKTRKD.

It belongs to the universal ribosomal protein uL6 family. Part of the 50S ribosomal subunit.

This protein binds to the 23S rRNA, and is important in its secondary structure. It is located near the subunit interface in the base of the L7/L12 stalk, and near the tRNA binding site of the peptidyltransferase center. The polypeptide is Large ribosomal subunit protein uL6 (Aster yellows witches'-broom phytoplasma (strain AYWB)).